The sequence spans 395 residues: Dihydroorotate dehydrogenase (quinone), mitochondrial (395 aa).

Residues 1-10 (MAWRQLKKRA) constitute a mitochondrion; not cleaved transit peptide. At 1 to 10 (MAWRQLKKRA) the chain is on the mitochondrial matrix side. A helical membrane pass occupies residues 11-30 (QDAMVILGGGGLLFASYLTA). Over 31-395 (TGDEHFYAEL…TDAIGADHRR (365 aa)) the chain is Mitochondrial intermembrane. FMN is bound by residues 95-99 (AGFDK) and S119. K99 is a binding site for substrate. Substrate is bound at residue 144-148 (NRYGF). The FMN site is built by N180 and N211. 211-216 (NVSSPN) serves as a coordination point for substrate. The active-site Nucleophile is the S214. FMN is bound by residues K254 and T282. Substrate is bound at residue 283–284 (NS). Residues G305, G334, and 355–356 (YT) contribute to the FMN site.

Belongs to the dihydroorotate dehydrogenase family. Type 2 subfamily. Monomer. FMN is required as a cofactor. Post-translationally, the uncleaved transit peptide is required for mitochondrial targeting and proper membrane integration.

It is found in the mitochondrion inner membrane. The enzyme catalyses (S)-dihydroorotate + a quinone = orotate + a quinol. The protein operates within pyrimidine metabolism; UMP biosynthesis via de novo pathway; orotate from (S)-dihydroorotate (quinone route): step 1/1. Its function is as follows. Catalyzes the conversion of dihydroorotate to orotate with quinone as electron acceptor. Required for UMP biosynthesis via de novo pathway. The protein is Dihydroorotate dehydrogenase (quinone), mitochondrial (DHODH) of Bos taurus (Bovine).